The chain runs to 323 residues: Sphingolipid delta(4)-desaturase DES1 (323 aa).

The next 2 helical transmembrane spans lie at 41–61 and 68–88; these read YNLI…FYLV and WVVF…TLAI. A Histidine box-1 motif is present at residues 89–93; it reads HEISH. Residues 102 to 122 form a helical membrane-spanning segment; sequence AMWNRWFGIFANLPLGLPYSI. A Histidine box-2 motif is present at residues 128–132; that stretch reads HMDHH. Transmembrane regions (helical) follow at residues 159 to 179, 185 to 205, and 209 to 229; these read KFIW…CINP, LEII…YLWG, and IFYM…SGHF. A Histidine box-3 motif is present at residues 259-263; it reads HNEHH.

This sequence belongs to the fatty acid desaturase type 1 family. DEGS subfamily. Interacts with RLBP1; the interaction increases synthesis of chromophore-precursors by DEGS1. As to expression, expressed in retina and retinal pigment epithelium by Mueller cells (at protein level).

The protein resides in the endoplasmic reticulum membrane. The catalysed reaction is an N-acylsphinganine + 2 Fe(II)-[cytochrome b5] + O2 + 2 H(+) = an N-acylsphing-4-enine + 2 Fe(III)-[cytochrome b5] + 2 H2O. The enzyme catalyses all-trans-retinol = 11-cis-retinol. It catalyses the reaction all-trans-retinol = 9-cis-retinol. It carries out the reaction all-trans-retinol = 13-cis-retinol. The catalysed reaction is 11-cis-retinol = 13-cis-retinol. The enzyme catalyses 11-cis-retinol = 9-cis-retinol. Its function is as follows. Has sphingolipid-delta-4-desaturase activity. Converts D-erythro-sphinganine to D-erythro-sphingosine (E-sphing-4-enine). Catalyzes the equilibrium isomerization of retinols. This chain is Sphingolipid delta(4)-desaturase DES1 (DEGS1), found in Gallus gallus (Chicken).